The primary structure comprises 740 residues: MRLRWTQGGNMWLGVLLTLQLCSSLEGQENSFTINSIHMEMLPGQEVHNGENLTLQCIVDVSTTSSVKPQHQVLFYKDDVLFHNVSSTKNTESYFISEARVYNSGRYKCTVILNNKEKTTAEYKVVVEGVSNPRVTLDKKEVIEGGVVKVTCSVPEEKPPVHFIIEKFELNVRDVKQRREKTANNQNSVTLEFTVEEQDRVILFSCQANVIFGTRVEISDSVRSDLVTVRESFSNPKFHISPKGVIIEGDQLLIKCTIQVTHQAQSFPEIIIQKDKEIVAHSRNGSEAVYSVMATVEHNSNYTCKVEASRISKVSSIMVNITELFSRPKLKSSATRLDQGESLRLWCSIPGAPPEANFTIQKGGMMMLQDQNLTKVASERDSGTYTCVAGIGKVVKRSNEVQIAVCEMLSKPSIFHDSGSEVIKGQTIEVSCQSINGTSPISYQLLKGSDLLASQNVSSNEPAVFKDNPTKDVEYQCIADNCHSHAGMPSKVLRVKVIAPVEEVKLSILLSEEVESGQAIVLQCSVKEGSGPITYKFYKEKENKPFHQVTLNDTQAIWHKPKASKDQEGQYYCLASNRATPSKNFLQSNILAVRVYLAPWKKGLIAVVVIAVIIAVLLLGARFYFLKKSKAKQMPVEMCRPAAPLLNSNNEKTLSDPNTEANRHYGYNEDVGNHAMKPLNENKEPLTLDVEYTEVEVTSPEPHRGLGTKGTETVYSEIRKADPDLVENRYSRTEGSLDGT.

A signal peptide spans 1-27 (MRLRWTQGGNMWLGVLLTLQLCSSLEG). The Extracellular portion of the chain corresponds to 28–602 (QENSFTINSI…VRVYLAPWKK (575 aa)). Ig-like C2-type domains lie at 35–126 (NSIH…YKVV), 145–223 (GGVV…DSVR), and 236–315 (PKFH…SKVS). N-linked (GlcNAc...) asparagine glycans are attached at residues N52 and N84. 3 cysteine pairs are disulfide-bonded: C57–C109, C152–C206, and C256–C304. N-linked (GlcNAc...) asparagine glycans are attached at residues N284, N301, N320, N357, N372, N436, N456, and N552. 3 consecutive Ig-like C2-type domains span residues 328–404 (PKLK…VQIA), 425–494 (GQTI…KVLR), and 500–592 (PVEE…NILA). Cystine bridges form between C347-C387, C432-C477, and C524-C573. The chain crosses the membrane as a helical span at residues 603-621 (GLIAVVVIAVIIAVLLLGA). At 622–740 (RFYFLKKSKA…SRTEGSLDGT (119 aa)) the chain is on the cytoplasmic side. 2 short sequence motifs (ITIM motif) span residues 690–695 (VEYTEV) and 713–718 (TVYSEI). Y692 and Y715 each carry phosphotyrosine; by FER. The segment at 697–740 (VTSPEPHRGLGTKGTETVYSEIRKADPDLVENRYSRTEGSLDGT) is disordered. Residues 711–731 (TETVYSEIRKADPDLVENRYS) are membrane-bound segment which detaches upon phosphorylation. Residues 717-732 (EIRKADPDLVENRYSR) show a composition bias toward basic and acidic residues. The may play a role in cytoprotective signaling stretch occupies residues 723 to 740 (PDLVENRYSRTEGSLDGT). 2 positions are modified to phosphoserine: S731 and S736.

In terms of assembly, trans-homodimer (via Ig-like C2-type 1 and Ig-like C2-type 2 domains); trans-homodimerization is required for cell-cell interaction. Forms a complex with BDKRB2 and GNAQ. Interacts with BDKRB2 and GNAQ. Interacts with PTPN11; Tyr-715 is critical for PTPN11 recruitment. Interacts with FER. Interacts with CD177; the interaction is Ca(2+)-dependent; the interaction is direct. In terms of processing, phosphorylated on Ser and Tyr residues by src kinases after cellular activation. Upon activation, phosphorylated on Ser-731 which probably initiates the dissociation of the membrane-interaction segment (residues 711-731) from the cell membrane allowing the sequential phosphorylation of Tyr-715 and Tyr-692. Constitutively phosphorylated on Ser-736 in resting platelets. Phosphorylated on tyrosine residues by FER and FES in response to FCER1 activation. In endothelial cells Fyn mediates mechanical-force (stretch or pull) induced tyrosine phosphorylation. Post-translationally, palmitoylation by ZDHHC21 is necessary for cell surface expression in endothelial cells and enrichment in membrane rafts.

It is found in the cell membrane. The protein localises to the membrane raft. The protein resides in the cell junction. In terms of biological role, cell adhesion molecule which is required for leukocyte transendothelial migration (TEM) under most inflammatory conditions. Tyr-692 plays a critical role in TEM and is required for efficient trafficking of PECAM1 to and from the lateral border recycling compartment (LBRC) and is also essential for the LBRC membrane to be targeted around migrating leukocytes. Trans-homophilic interaction may play a role in endothelial cell-cell adhesion via cell junctions. Heterophilic interaction with CD177 plays a role in transendothelial migration of neutrophils. Homophilic ligation of PECAM1 prevents macrophage-mediated phagocytosis of neighboring viable leukocytes by transmitting a detachment signal. Promotes macrophage-mediated phagocytosis of apoptotic leukocytes by tethering them to the phagocytic cells; PECAM1-mediated detachment signal appears to be disabled in apoptotic leukocytes. Modulates bradykinin receptor BDKRB2 activation. Regulates bradykinin- and hyperosmotic shock-induced ERK1/2 activation in endothelial cells. Induces susceptibility to atherosclerosis. The sequence is that of Platelet endothelial cell adhesion molecule (PECAM1) from Sus scrofa (Pig).